A 272-amino-acid polypeptide reads, in one-letter code: R-spondin-3 (272 aa).

The signal sequence occupies residues 1 to 21 (MHLRLISWLFIILNFMEYIGS). FU repeat units lie at residues 35–86 (PNVS…GYYG) and 92–135 (INKC…GLEA). Residue asparagine 36 is glycosylated (N-linked (GlcNAc...) asparagine). 11 disulfides stabilise this stretch: cysteine 41-cysteine 48, cysteine 45-cysteine 54, cysteine 57-cysteine 76, cysteine 80-cysteine 95, cysteine 98-cysteine 105, cysteine 102-cysteine 111, cysteine 114-cysteine 125, cysteine 129-cysteine 142, cysteine 148-cysteine 190, cysteine 159-cysteine 166, and cysteine 199-cysteine 206. One can recognise a TSP type-1 domain in the interval 147 to 207 (HCEVSEWNPW…KCTVQRKKCQ (61 aa)). The tract at residues 201–272 (VQRKKCQKGE…QKSVSVSTVH (72 aa)) is disordered. Basic residues predominate over residues 213-223 (KKGRERKRKKP). A compositionally biased stretch (basic and acidic residues) spans 224–252 (NKGESKEAIPDSKSLESSKEIPEQRENKQ).

It belongs to the R-spondin family. In terms of assembly, interacts with the extracellular domain of FZD8 and LRP6. It however does not form a ternary complex with FZD8 and LRP6. Interacts with WNT1. Binds heparin. Interacts with LGR4, LGR5 and LGR6. Ubiquitously expressed. Expressed at higher level in placenta, small intestine, fetal thymus and lymph node. Highly expressed in endothelial cells.

The protein localises to the secreted. Its function is as follows. Activator of the canonical Wnt signaling pathway by acting as a ligand for LGR4-6 receptors, which acts as a key regulator of angiogenesis. Upon binding to LGR4-6 (LGR4, LGR5 or LGR6), LGR4-6 associate with phosphorylated LRP6 and frizzled receptors that are activated by extracellular Wnt receptors, triggering the canonical Wnt signaling pathway to increase expression of target genes. Also regulates the canonical Wnt/beta-catenin-dependent pathway and non-canonical Wnt signaling by acting as an inhibitor of ZNRF3, an important regulator of the Wnt signaling pathway. Acts as a ligand for frizzled FZD8 and LRP6. May negatively regulate the TGF-beta pathway. Acts as a key regulator of angiogenesis by controlling vascular stability and pruning: acts by activating the non-canonical Wnt signaling pathway in endothelial cells. Can also amplify Wnt signaling pathway independently of LGR4-6 receptors, possibly by acting as a direct antagonistic ligand to RNF43 and ZNRF3. The sequence is that of R-spondin-3 (RSPO3) from Homo sapiens (Human).